We begin with the raw amino-acid sequence, 213 residues long: Protein GrpE (213 aa).

The tract at residues 1-61 (MEQGEKQVME…AEKAPTAEEL (61 aa)) is disordered. Acidic residues predominate over residues 13-35 (TYDEPEREQPIEEEAAPQPEEES).

The protein belongs to the GrpE family. Homodimer.

The protein localises to the cytoplasm. In terms of biological role, participates actively in the response to hyperosmotic and heat shock by preventing the aggregation of stress-denatured proteins, in association with DnaK and GrpE. It is the nucleotide exchange factor for DnaK and may function as a thermosensor. Unfolded proteins bind initially to DnaJ; upon interaction with the DnaJ-bound protein, DnaK hydrolyzes its bound ATP, resulting in the formation of a stable complex. GrpE releases ADP from DnaK; ATP binding to DnaK triggers the release of the substrate protein, thus completing the reaction cycle. Several rounds of ATP-dependent interactions between DnaJ, DnaK and GrpE are required for fully efficient folding. This Geobacillus kaustophilus (strain HTA426) protein is Protein GrpE.